Consider the following 579-residue polypeptide: MSAKDYDFDIESVLPEEKAPQVSEAKKDYISQESTVLSGQVDFVEPEHKGFFQNLIDGFKPAREADGNGGPALKRGLSTRHMQLMSIGGAIGSGLYVGSGSALADGGPASVIINYILIGIMMFFVIYALGEMAVAYPVAGSFNTYATRFIDPAWGFAVSWNYFFNYFVTFPFELTTCAITFTFWTDVNCAVWISIFLVVVIGINLFGVRVFGEVEFVLALIKVVATVGFIILAIIINCGGVPTDHRGYIGGSIIKQKPFRHGFKGFCSVYTTAAFSFSGTEIVGLAAAEVGDPRKTLPGAVKQVFWRVAIFYIVSLILIGLLISPDDPKLMGNGSASVSPFVLAIQEANIKGLPSVFNAVIIISVISVTNSSTYTAGRTLHGMANLKQAPAFFKYTDRLGRPLIAMIVVLSFGFFAYINEANNNGNDISDTVFDWLLAISGLSNFFTWGSICLSHIMFRLAFKKQGHSLKELGFVSPMGIWGSVIGLGFNILCLMAEFYVSLFPIGGSPNANDFFQGYLAACITLVFFIGYKIYDRSHIPSLDKLDITTGLKTYEYEETKDSSDTGRFRFFKKIINTVC.

At 1-83 (MSAKDYDFDI…KRGLSTRHMQ (83 aa)) the chain is on the cytoplasmic side. A helical transmembrane segment spans residues 84–104 (LMSIGGAIGSGLYVGSGSALA). Residues 105–108 (DGGP) lie on the Extracellular side of the membrane. A helical membrane pass occupies residues 109–129 (ASVIINYILIGIMMFFVIYAL). Topologically, residues 130–161 (GEMAVAYPVAGSFNTYATRFIDPAWGFAVSWN) are cytoplasmic. Residues 162–184 (YFFNYFVTFPFELTTCAITFTFW) form a helical membrane-spanning segment. At 185–186 (TD) the chain is on the extracellular side. A helical membrane pass occupies residues 187 to 207 (VNCAVWISIFLVVVIGINLFG). Topologically, residues 208–215 (VRVFGEVE) are cytoplasmic. The chain crosses the membrane as a helical span at residues 216 to 236 (FVLALIKVVATVGFIILAIII). At 237 to 265 (NCGGVPTDHRGYIGGSIIKQKPFRHGFKG) the chain is on the extracellular side. The chain crosses the membrane as a helical span at residues 266–286 (FCSVYTTAAFSFSGTEIVGLA). The Cytoplasmic segment spans residues 287–303 (AAEVGDPRKTLPGAVKQ). The helical transmembrane segment at 304–324 (VFWRVAIFYIVSLILIGLLIS) threads the bilayer. At 325–347 (PDDPKLMGNGSASVSPFVLAIQE) the chain is on the extracellular side. A helical membrane pass occupies residues 348-368 (ANIKGLPSVFNAVIIISVISV). Topologically, residues 369 to 401 (TNSSTYTAGRTLHGMANLKQAPAFFKYTDRLGR) are cytoplasmic. The chain crosses the membrane as a helical span at residues 402–422 (PLIAMIVVLSFGFFAYINEAN). Over 423 to 431 (NNGNDISDT) the chain is Extracellular. A helical membrane pass occupies residues 432–452 (VFDWLLAISGLSNFFTWGSIC). At 453-471 (LSHIMFRLAFKKQGHSLKE) the chain is on the cytoplasmic side. A helical transmembrane segment spans residues 472 to 492 (LGFVSPMGIWGSVIGLGFNIL). At 493–513 (CLMAEFYVSLFPIGGSPNAND) the chain is on the extracellular side. A helical transmembrane segment spans residues 514 to 534 (FFQGYLAACITLVFFIGYKIY). The Cytoplasmic portion of the chain corresponds to 535-579 (DRSHIPSLDKLDITTGLKTYEYEETKDSSDTGRFRFFKKIINTVC).

Belongs to the amino acid-polyamine-organocation (APC) superfamily.

The protein localises to the golgi apparatus membrane. Its subcellular location is the cell membrane. Probable amino acid transporter that may play a role in function in microtubule organization since it causes microtubule defects when overexpressed. The chain is Amino acid transporter 1 (aat1) from Schizosaccharomyces pombe (strain 972 / ATCC 24843) (Fission yeast).